A 227-amino-acid chain; its full sequence is Peroxisomal membrane protein 11B (227 aa).

At 1-85 (MSLDTVDKLV…RNPGATPMIR (85 aa)) the chain is on the cytoplasmic side. A helical transmembrane segment spans residues 86–106 (FLAVLANSGEMVYFFFDHFLW). Residues 107-201 (LSRIGSIDAK…IALAEIHPNP (95 aa)) lie on the Lumenal side of the membrane. The helical transmembrane segment at 202 to 222 (FCNHTITLGISGLVSAWAGWY) threads the bilayer. Residues 223 to 227 (RNWPS) are Cytoplasmic-facing.

Belongs to the peroxin-11 family. As to quaternary structure, homooligomer. Interacts with ARC5 and FIS1B on peroxisomes. In terms of tissue distribution, expressed in roots, leaves and developing siliques.

It localises to the peroxisome membrane. Involved in peroxisomal proliferation. Promotes peroxisomal duplication, aggregation or elongation without fission. In Arabidopsis thaliana (Mouse-ear cress), this protein is Peroxisomal membrane protein 11B (PEX11B).